Here is a 284-residue protein sequence, read N- to C-terminus: Protein phosphatase 1 regulatory subunit 3B (284 aa).

Residues 61 to 64 carry the PP1-binding motif motif; that stretch reads RVSF. One can recognise a CBM21 domain in the interval 124-232; that stretch reads RNRLQTNHVC…SNKGKNYRIT (109 aa). Position 260 is a phosphoserine (Ser260).

In terms of assembly, interacts with glycogen, PPP1CC catalytic subunit of PP1 and PYGL. Associates with glycogen particles. Forms complexes with debranching enzyme, glycogen phosphorylase, glycogen synthase and phosphorylase kinase which is necessary for its regulation of PP1 activity. As to expression, highly expressed in liver. Moderately expressed in kidney, heart, testis, spleen and lung. Weakly expressed in skeletal muscle (at protein level). Expressed predominantly in liver. Expressed moderately in heart. Expressed weakly in lung, kidney, spleen and skeletal muscle.

In terms of biological role, acts as a glycogen-targeting subunit for phosphatase PP1. Facilitates interaction of the PP1 with enzymes of the glycogen metabolism and regulates its activity. Suppresses the rate at which PP1 dephosphorylates (inactivates) glycogen phosphorylase and enhances the rate at which it activates glycogen synthase and therefore limits glycogen breakdown. Its activity is inhibited by PYGL, resulting in inhibition of the glycogen synthase and glycogen phosphorylase phosphatase activities of PP1. Dramatically increases basal and insulin-stimulated glycogen synthesis upon overexpression in hepatocytes. In Rattus norvegicus (Rat), this protein is Protein phosphatase 1 regulatory subunit 3B (Ppp1r3b).